Here is a 372-residue protein sequence, read N- to C-terminus: METKKTLREGYTTGLCAAAATKAALTALITGQVQTDATIRIPIGRVVTFSLASCSFDGETATASVVKDGGDDPDATHGALIVSTVSWASSPGVHIDGGEGVGRVTKPGLPVPVGEAAINPVPRQMIHEAVNEVLAQYGLHRGVNVVISVPGGEEIAKKTLNPRLGIMGGISILGTRGIVVPFSTAAYRASIVQALQVAKANGCRHVVITTGGRSEKYAMQEYPHLPEEAFIEMGDFVGFTLKQCKRLGIKMVSMVGMMGKFSKVAQGVMMVHSKSAPVDFGFLAALAEQAGASSALVAAVRGANTAAQVGDMMQEAGCMKFFELLCEACCQAALHEVGGGLTVATSIYTMNGQQLGKAVQTDGDDEVDRCGC.

It belongs to the CbiD family.

It catalyses the reaction Co-precorrin-5B + S-adenosyl-L-methionine = Co-precorrin-6A + S-adenosyl-L-homocysteine. It functions in the pathway cofactor biosynthesis; adenosylcobalamin biosynthesis; cob(II)yrinate a,c-diamide from sirohydrochlorin (anaerobic route): step 6/10. In terms of biological role, catalyzes the methylation of C-1 in cobalt-precorrin-5B to form cobalt-precorrin-6A. The protein is Cobalt-precorrin-5B C(1)-methyltransferase of Geobacillus thermodenitrificans (strain NG80-2).